Consider the following 489-residue polypeptide: MKYHDLRDFLTLLEQQGELKRITLPVDPHLEITEIADRTLRAGGPALLFENPKGYSMPVLCNLFGTPRRVALGMGQEDVSSLREVGKLLAFLKEPEPPKGFRDLFDKLPQFKQVLNMPTKRLRGAPCQQKIIQGDDVDLNKIPIMTCWPEDAAPLITWGLTVTRGPHKERQNLGIYRQQLIGKNKLIMRWLSHRGGALDFQEWCAAHPGERFPVSVALGADPATILGAVTPVPDTLSEYAFAGLLRGTKTEVVKCVSNDLEVPASAEIVLEGYIEAGEMAPEGPYGDHTGYYNEVDSFPVFTVTHITQREDAIYHSTYTGRPPDEPAVLGVALNEVFVPILQKQFPEIVDFYLPPEGCSYRLAVVTMKKQYAGHAKRVMMGVWSFLRQFMYTKFVIVCDDDVNARDWNDVIWAITTRMDPARDTVLVENTPIDYLDFASPVSGLGSKMGLDATNKWPGETQREWGRPIKKDPQVTARIDAIWDELAIFK.

N172 serves as a coordination point for Mn(2+). Residues 175-177 (IYR), 189-191 (RWL), and 194-195 (RG) contribute to the prenylated FMN site. Mn(2+) is bound at residue E238. D287 functions as the Proton donor in the catalytic mechanism.

Belongs to the UbiD family. As to quaternary structure, homohexamer. Prenylated FMN serves as cofactor. Mn(2+) is required as a cofactor.

The protein localises to the cell membrane. It carries out the reaction a 4-hydroxy-3-(all-trans-polyprenyl)benzoate + H(+) = a 2-(all-trans-polyprenyl)phenol + CO2. It participates in cofactor biosynthesis; ubiquinone biosynthesis. Functionally, catalyzes the decarboxylation of 3-octaprenyl-4-hydroxy benzoate to 2-octaprenylphenol, an intermediate step in ubiquinone biosynthesis. In Klebsiella pneumoniae (strain 342), this protein is 3-octaprenyl-4-hydroxybenzoate carboxy-lyase.